The following is an 827-amino-acid chain: Centrosomal protein of 95 kDa (827 aa).

Disordered regions lie at residues 115–145 (ISES…ERTE), 183–249 (GDTA…MVPS), 308–372 (FLTS…MSEK), 388–476 (LGDR…DSCH), and 489–558 (ELRK…KASP). Residues 123 to 145 (SETEQYSKDSHGEEAGEDLERTE) show a composition bias toward basic and acidic residues. Positions 187-199 (HTFSQRSNGAQNS) are enriched in polar residues. Composition is skewed to basic and acidic residues over residues 327-343 (EATR…DENR) and 360-372 (PLTE…MSEK). Ser447, Ser449, and Ser451 each carry phosphoserine. Coiled coils occupy residues 584-633 (LTKM…VKKE) and 701-795 (LQIQ…DDDA).

The protein resides in the cytoplasm. It localises to the cytoskeleton. Its subcellular location is the microtubule organizing center. It is found in the centrosome. The protein localises to the spindle pole. The sequence is that of Centrosomal protein of 95 kDa (Cep95) from Mus musculus (Mouse).